The following is a 589-amino-acid chain: Aspartate--tRNA ligase (589 aa).

Position 171 (Glu171) interacts with L-aspartate. The aspartate stretch occupies residues 195–198 (QLFK). Arg217 is a binding site for L-aspartate. ATP-binding positions include 217 to 219 (RDE) and Gln226. Position 448 (His448) interacts with L-aspartate. An ATP-binding site is contributed by Glu482. Arg489 provides a ligand contact to L-aspartate. 534 to 537 (GLDR) is an ATP binding site.

It belongs to the class-II aminoacyl-tRNA synthetase family. Type 1 subfamily. As to quaternary structure, homodimer.

It is found in the cytoplasm. It catalyses the reaction tRNA(Asp) + L-aspartate + ATP = L-aspartyl-tRNA(Asp) + AMP + diphosphate. Catalyzes the attachment of L-aspartate to tRNA(Asp) in a two-step reaction: L-aspartate is first activated by ATP to form Asp-AMP and then transferred to the acceptor end of tRNA(Asp). The chain is Aspartate--tRNA ligase from Idiomarina loihiensis (strain ATCC BAA-735 / DSM 15497 / L2-TR).